Reading from the N-terminus, the 136-residue chain is Flagellar basal-body rod protein FlgC (136 aa).

The protein belongs to the flagella basal body rod proteins family. In terms of assembly, the basal body constitutes a major portion of the flagellar organelle and consists of four rings (L,P,S, and M) mounted on a central rod. The rod consists of about 26 subunits of FlgG in the distal portion, and FlgB, FlgC and FlgF are thought to build up the proximal portion of the rod with about 6 subunits each.

The protein localises to the bacterial flagellum basal body. This Buchnera aphidicola subsp. Baizongia pistaciae (strain Bp) protein is Flagellar basal-body rod protein FlgC (flgC).